The primary structure comprises 376 residues: Putative phosphoserine aminotransferase (376 aa).

R50 lines the L-glutamate pocket. Residues 84–85, F108, T154, D176, and Q199 each bind pyridoxal 5'-phosphate; that span reads AT. K200 bears the N6-(pyridoxal phosphate)lysine mark. Position 251-252 (251-252) interacts with pyridoxal 5'-phosphate; it reads NT.

This sequence belongs to the class-V pyridoxal-phosphate-dependent aminotransferase family. SerC subfamily. Homodimer. The cofactor is pyridoxal 5'-phosphate.

Its subcellular location is the cytoplasm. It carries out the reaction O-phospho-L-serine + 2-oxoglutarate = 3-phosphooxypyruvate + L-glutamate. The catalysed reaction is 4-(phosphooxy)-L-threonine + 2-oxoglutarate = (R)-3-hydroxy-2-oxo-4-phosphooxybutanoate + L-glutamate. The protein operates within amino-acid biosynthesis; L-serine biosynthesis; L-serine from 3-phospho-D-glycerate: step 2/3. It participates in cofactor biosynthesis; pyridoxine 5'-phosphate biosynthesis; pyridoxine 5'-phosphate from D-erythrose 4-phosphate: step 3/5. Catalyzes the reversible conversion of 3-phosphohydroxypyruvate to phosphoserine and of 3-hydroxy-2-oxo-4-phosphonooxybutanoate to phosphohydroxythreonine. In Mycobacterium bovis (strain ATCC BAA-935 / AF2122/97), this protein is Putative phosphoserine aminotransferase.